The following is a 1196-amino-acid chain: Truncated transposon Ty1-A Gag-Pol polyprotein (1196 aa).

An Integrase catalytic domain is found at 101-276; that stretch reads NSYEPFQYLH…AGLDISTLLP (176 aa). Mg(2+) contacts are provided by Asp-112 and Asp-177. Disordered regions lie at residues 397-528, 533-552, and 571-628; these read SKAV…ETEK, RSPS…NIVP, and DLPL…DNET. Residues 401–410 are compositionally biased toward low complexity; that stretch reads SPTDSTPPST. The segment covering 446-456 has biased composition (polar residues); it reads STPQISNIEST. The span at 479 to 494 shows a compositional bias: basic and acidic residues; that stretch reads ESSHASKSKDFRHSDS. Composition is skewed to polar residues over residues 495 to 523 and 542 to 552; these read YSEN…QISD and PENNSSHNIVP. Positions 619-653 match the Bipartite nuclear localization signal motif; sequence KKRSLEDNETEIKVSRDTWNTKNMRSLEPPRSKKR. The 139-residue stretch at 779–917 folds into the Reverse transcriptase Ty1/copia-type domain; that stretch reads NNYYITQLDI…DILGLEIKYQ (139 aa). Residues Asp-787, Asp-868, Asp-869, Asp-1051, Glu-1093, and Asp-1126 each coordinate Mg(2+). An RNase H Ty1/copia-type domain is found at 1051–1193; sequence DASYGNQPYY…IKTFKLLTNK (143 aa).

Initially, virus-like particles (VLPs) are composed of the structural unprocessed proteins Gag and Gag-Pol, and also contain the host initiator methionine tRNA (tRNA(i)-Met) which serves as a primer for minus-strand DNA synthesis, and a dimer of genomic Ty RNA. Processing of the polyproteins occurs within the particle and proceeds by an ordered pathway, called maturation. First, the protease (PR) is released by autocatalytic cleavage of the Gag-Pol polyprotein yielding capsid protein p45 and a Pol-p154 precursor protein. This cleavage is a prerequisite for subsequent processing of Pol-p154 at the remaining sites to release the mature structural and catalytic proteins. Maturation takes place prior to the RT reaction and is required to produce transposition-competent VLPs.

The protein localises to the cytoplasm. The protein resides in the nucleus. It carries out the reaction DNA(n) + a 2'-deoxyribonucleoside 5'-triphosphate = DNA(n+1) + diphosphate. It catalyses the reaction Endonucleolytic cleavage to 5'-phosphomonoester.. In terms of biological role, reverse transcriptase/ribonuclease H (RT) is a multifunctional enzyme that catalyzes the conversion of the retro-elements RNA genome into dsDNA within the VLP. The enzyme displays a DNA polymerase activity that can copy either DNA or RNA templates, and a ribonuclease H (RNase H) activity that cleaves the RNA strand of RNA-DNA heteroduplexes during plus-strand synthesis and hydrolyzes RNA primers. The conversion leads to a linear dsDNA copy of the retrotransposon that includes long terminal repeats (LTRs) at both ends. Its function is as follows. Integrase (IN) targets the VLP to the nucleus, where a subparticle preintegration complex (PIC) containing at least integrase and the newly synthesized dsDNA copy of the retrotransposon must transit the nuclear membrane. Once in the nucleus, integrase performs the integration of the dsDNA into the host genome. This Saccharomyces cerevisiae (strain ATCC 204508 / S288c) (Baker's yeast) protein is Truncated transposon Ty1-A Gag-Pol polyprotein (TY1B-A).